The primary structure comprises 49 residues: Large ribosomal subunit protein bL33B (49 aa).

This sequence belongs to the bacterial ribosomal protein bL33 family.

The sequence is that of Large ribosomal subunit protein bL33B from Acholeplasma laidlawii (strain PG-8A).